We begin with the raw amino-acid sequence, 291 residues long: Cell division protein FtsX (291 aa).

The Cytoplasmic segment spans residues 1-18; it reads MSSNFDKFQKRRLISSYF. Residues 19–39 traverse the membrane as a helical segment; the sequence is SVVLSVFLVLFLLGVLGLFII. Residues 40–162 are Periplasmic-facing; the sequence is NSKKLADDFK…VNLVNDNIKK (123 aa). Residues 163–183 traverse the membrane as a helical segment; the sequence is VSMWILIISGFLTVIAVLLIN. Residues 184 to 220 lie on the Cytoplasmic side of the membrane; that stretch reads SSLRLSIHSNRFIIKTMQMVGATKSFIRKPFVMRSVK. A helical membrane pass occupies residues 221–241; sequence LGMLGALLAIIALIGLLFYVE. Residues 242 to 253 are Periplasmic-facing; that stretch reads TNFPGLGILEDK. The helical transmembrane segment at 254–274 threads the bilayer; that stretch reads ALIGLVLLAVFGLGVLITWVS. Residues 275-291 lie on the Cytoplasmic side of the membrane; sequence THFATQRFLNLRTDDLY.

It belongs to the ABC-4 integral membrane protein family. FtsX subfamily.

Its subcellular location is the cell inner membrane. Its function is as follows. Required for cell division and gliding motility. The protein is Cell division protein FtsX of Flavobacterium johnsoniae (strain ATCC 17061 / DSM 2064 / JCM 8514 / BCRC 14874 / CCUG 350202 / NBRC 14942 / NCIMB 11054 / UW101) (Cytophaga johnsonae).